The primary structure comprises 700 residues: Polyribonucleotide nucleotidyltransferase (700 aa).

Mg(2+)-binding residues include D486 and D492. A KH domain is found at 554 to 613; that stretch reads PKIISTTINPDKIREVIGPGGKMINKIIDETGVKIDINDDGRVYIFSSDIQAGKRARSMI. In terms of domain architecture, S1 motif spans 623-691; that stretch reads GQVFLGRVIR…KQGRVNLSRK (69 aa).

Belongs to the polyribonucleotide nucleotidyltransferase family. Mg(2+) serves as cofactor.

It is found in the cytoplasm. The enzyme catalyses RNA(n+1) + phosphate = RNA(n) + a ribonucleoside 5'-diphosphate. Its function is as follows. Involved in mRNA degradation. Catalyzes the phosphorolysis of single-stranded polyribonucleotides processively in the 3'- to 5'-direction. This chain is Polyribonucleotide nucleotidyltransferase, found in Acetivibrio thermocellus (strain ATCC 27405 / DSM 1237 / JCM 9322 / NBRC 103400 / NCIMB 10682 / NRRL B-4536 / VPI 7372) (Clostridium thermocellum).